Reading from the N-terminus, the 119-residue chain is Protein TusC (119 aa).

Belongs to the DsrF/TusC family. In terms of assembly, heterohexamer, formed by a dimer of trimers. The hexameric TusBCD complex contains 2 copies each of TusB, TusC and TusD. The TusBCD complex interacts with TusE.

It localises to the cytoplasm. Part of a sulfur-relay system required for 2-thiolation of 5-methylaminomethyl-2-thiouridine (mnm(5)s(2)U) at tRNA wobble positions. This is Protein TusC from Shigella dysenteriae serotype 1 (strain Sd197).